A 137-amino-acid polypeptide reads, in one-letter code: Major seminal plasma glycoprotein PSP-II (137 aa).

The N-terminal stretch at 1-21 (MKLGTAIPWALLLSTATLVST) is a signal peptide. 2 disulfides stabilise this stretch: Cys30–Cys51 and Cys74–Cys95. Residues 30–131 (CGRVIKDTSG…SPFLIYFYGS (102 aa)) form the CUB domain. N-linked (GlcNAc...) (complex) asparagine glycosylation is present at Asn119.

In terms of assembly, monomer or heterodimer with PSP-I (depending on the type of glycosylation of PSP-I). Seminal plasma or sperm.

It localises to the secreted. This chain is Major seminal plasma glycoprotein PSP-II, found in Sus scrofa (Pig).